A 514-amino-acid polypeptide reads, in one-letter code: ATP synthase subunit alpha (514 aa).

170–177 (GDRQIGKT) contacts ATP.

It belongs to the ATPase alpha/beta chains family. F-type ATPases have 2 components, CF(1) - the catalytic core - and CF(0) - the membrane proton channel. CF(1) has five subunits: alpha(3), beta(3), gamma(1), delta(1), epsilon(1). CF(0) has three main subunits: a(1), b(2) and c(9-12). The alpha and beta chains form an alternating ring which encloses part of the gamma chain. CF(1) is attached to CF(0) by a central stalk formed by the gamma and epsilon chains, while a peripheral stalk is formed by the delta and b chains.

The protein localises to the cell inner membrane. It catalyses the reaction ATP + H2O + 4 H(+)(in) = ADP + phosphate + 5 H(+)(out). Its function is as follows. Produces ATP from ADP in the presence of a proton gradient across the membrane. The alpha chain is a regulatory subunit. This is ATP synthase subunit alpha from Stutzerimonas stutzeri (strain A1501) (Pseudomonas stutzeri).